Reading from the N-terminus, the 229-residue chain is Uracil-DNA glycosylase (229 aa).

The active-site Proton acceptor is the aspartate 67.

This sequence belongs to the uracil-DNA glycosylase (UDG) superfamily. UNG family.

The protein resides in the cytoplasm. It catalyses the reaction Hydrolyzes single-stranded DNA or mismatched double-stranded DNA and polynucleotides, releasing free uracil.. Excises uracil residues from the DNA which can arise as a result of misincorporation of dUMP residues by DNA polymerase or due to deamination of cytosine. This is Uracil-DNA glycosylase from Coxiella burnetii (strain RSA 493 / Nine Mile phase I).